We begin with the raw amino-acid sequence, 805 residues long: H(+)/Cl(-) exchange transporter 7 (805 aa).

The interval 1 to 49 (MANVSKKVSWSGRDRDDEEAAPLLRRTARPGGGTPLLNGAGPGAARQSP) is disordered. At 1-126 (MANVSKKVSW…TAFRTVEIKR (126 aa)) the chain is on the cytoplasmic side. A phosphoserine mark is found at serine 9 and serine 60. A run of 2 helical transmembrane segments spans residues 127–159 (WVICALIGILTGLVACFIDIVVENLAGLKYRVI) and 174–197 (FSLLLWATLNAAFVLVGSVIVAFI). The Selectivity filter part_1 motif lies at 203–207 (GSGIP). A chloride-binding site is contributed by serine 204. Residues 206–213 (IPQIKCFL) constitute an intramembrane region (helical). 2 helical membrane-spanning segments follow: residues 223 to 241 (RLKTLVIKVSGVILSVVGG) and 247 to 264 (EGPMIHSGSVIAAGISQG). The Selectivity filter part_2 motif lies at 245 to 249 (GKEGP). Intramembrane regions (helical) lie at residues 288 to 300 (FVSAGAAAGVSAA) and 304 to 312 (PVGGVLFSL). 5 consecutive transmembrane segments (helical) span residues 322-341 (FLTWRIFFASMISTFTLNFV), 375-405 (IPVFIAMGVVGGVLGAVFNALNYWLTMFRIR), 410-432 (PCLQVIEAVLVAAVTATVAFVLI), 487-507 (PLTLGLFTLVYFFLACWTYGL), and 512-535 (GVFIPSLLIGAAWGRLFGISLSYL). The Selectivity filter part_3 signature appears at 512–516 (GVFIP). Phenylalanine 514 provides a ligand contact to chloride. An intramembrane region (helical) is located at residues 545–559 (GKYALMGAAAQLGGI). The segment at residues 560 to 562 (VRM) is an intramembrane region (note=Loop between two helices). The segment at residues 563–574 (TLSLTVIMMEAT) is an intramembrane region (helical). Positions 575 to 578 (SNVT) form an intramembrane region, note=Loop between two helices. The chain crosses the membrane as a helical span at residues 579 to 597 (YGFPIMLVLMTAKIVGDVF). The Cytoplasmic segment spans residues 598–805 (IEGLYDMHIQ…GLEELSLAQT (208 aa)). Residue tyrosine 602 coordinates chloride. CBS domains are found at residues 631–695 (MSTP…VFVE) and 741–799 (MNPS…GLEE). Residues 658-660 (HNG) and 783-786 (TRKD) contribute to the ATP site. A Phosphoserine modification is found at serine 801.

Belongs to the chloride channel (TC 2.A.49) family. ClC-7/CLCN7 subfamily. As to quaternary structure, chloride channel 7 are heteromers of alpha (CLCN7) and beta (OSTM1) subunits. In terms of tissue distribution, brain and kidney.

It localises to the lysosome membrane. It carries out the reaction 2 chloride(in) + H(+)(out) = 2 chloride(out) + H(+)(in). Its function is as follows. Slowly voltage-gated channel mediating the exchange of chloride ions against protons. Functions as antiporter and contributes to the acidification of the lysosome lumen and may be involved in maintaining lysosomal pH. The CLC channel family contains both chloride channels and proton-coupled anion transporters that exchange chloride or another anion for protons. The presence of conserved gating glutamate residues is typical for family members that function as antiporters. In Homo sapiens (Human), this protein is H(+)/Cl(-) exchange transporter 7.